Consider the following 345-residue polypeptide: Type II restriction enzyme HgiCI (345 aa).

The enzyme catalyses Endonucleolytic cleavage of DNA to give specific double-stranded fragments with terminal 5'-phosphates.. In terms of biological role, a P subtype restriction enzyme that recognizes the double-stranded sequence 5'-GGYRCC-3' and cleaves after G-1. This chain is Type II restriction enzyme HgiCI (hgiCIR), found in Herpetosiphon aurantiacus (Herpetosiphon giganteus).